A 259-amino-acid polypeptide reads, in one-letter code: Small ribosomal subunit protein mS23 (259 aa).

The span at 230 to 244 (RAASFTGSALPSSEE) shows a compositional bias: polar residues. Residues 230-259 (RAASFTGSALPSSEESAPVDEETEKVPQQV) form a disordered region.

Belongs to the mitochondrion-specific ribosomal protein mS23 family. Component of the mitochondrial small ribosomal subunit.

Its subcellular location is the mitochondrion. The chain is Small ribosomal subunit protein mS23 (rsm25) from Aspergillus terreus (strain NIH 2624 / FGSC A1156).